A 1220-amino-acid chain; its full sequence is DNA polymerase catalytic subunit (1220 aa).

2 disordered regions span residues Gly21–Gln43 and Gln641–Val691. A compositionally biased stretch (polar residues) spans Ser646 to Phe660.

This sequence belongs to the DNA polymerase type-B family. As to quaternary structure, forms a complex with the ssDNA-binding protein, the DNA polymerase processivity factor, and the alkaline exonuclease. Interacts with the helicase-primase complex composed of the primase, the helicase and the primase-associated factor; this interaction may coordinate leading and lagging strand DNA synthesis at the replication fork.

Its subcellular location is the host nucleus. The catalysed reaction is DNA(n) + a 2'-deoxyribonucleoside 5'-triphosphate = DNA(n+1) + diphosphate. The enzyme catalyses Endonucleolytic cleavage to 5'-phosphomonoester.. In terms of biological role, replicates viral genomic DNA. The replication complex is composed of six viral proteins: the DNA polymerase, processivity factor, primase, primase-associated factor, helicase, and ssDNA-binding protein. Additionally, the polymerase contains an intrinsic ribonuclease H (RNase H) activity that specifically degrades RNA/DNA heteroduplexes or duplex DNA substrates in the 5' to 3' direction. Therefore, it can catalyze the excision of the RNA primers that initiate the synthesis of Okazaki fragments at a replication fork during viral DNA replication. The sequence is that of DNA polymerase catalytic subunit from Equine herpesvirus 1 (strain Ab4p) (EHV-1).